We begin with the raw amino-acid sequence, 109 residues long: MEPNSPKKIQFAVPVFQSQIAPEAAEQIRKRRPTPASLVILNEHNPPEIDDKRGPNTQGELQNASPKQRKQSVYTPPTIKGVKHLKGQNESAFPEEEEGTNEREEQRDH.

The disordered stretch occupies residues 25–109; it reads AEQIRKRRPT…TNEREEQRDH (85 aa). Residues 45-54 show a composition bias toward basic and acidic residues; the sequence is NPPEIDDKRG. Over residues 55–75 the composition is skewed to polar residues; that stretch reads PNTQGELQNASPKQRKQSVYT. The span at 100–109 shows a compositional bias: basic and acidic residues; sequence TNEREEQRDH.

Belongs to the protein phosphatase inhibitor 1 family.

The protein localises to the cytoplasm. May increase cell susceptibility to TNF-induced apoptosis. In Homo sapiens (Human), this protein is Protein phosphatase 1 regulatory subunit 1C (PPP1R1C).